We begin with the raw amino-acid sequence, 126 residues long: Large ribosomal subunit protein bL12 (126 aa).

This sequence belongs to the bacterial ribosomal protein bL12 family. As to quaternary structure, homodimer. Part of the ribosomal stalk of the 50S ribosomal subunit. Forms a multimeric L10(L12)X complex, where L10 forms an elongated spine to which 2 to 4 L12 dimers bind in a sequential fashion. Binds GTP-bound translation factors.

Its function is as follows. Forms part of the ribosomal stalk which helps the ribosome interact with GTP-bound translation factors. Is thus essential for accurate translation. The protein is Large ribosomal subunit protein bL12 of Teredinibacter turnerae (strain ATCC 39867 / T7901).